The primary structure comprises 268 residues: Shikimate dehydrogenase (NADP(+)) (268 aa).

Shikimate is bound by residues 15-17 (SKS) and Thr-60. Catalysis depends on Lys-64, which acts as the Proton acceptor. Asn-85 and Asp-101 together coordinate shikimate. NADP(+)-binding positions include 121 to 125 (GAGGS) and Leu-208. A shikimate-binding site is contributed by Tyr-210. Gly-230 is an NADP(+) binding site.

The protein belongs to the shikimate dehydrogenase family. In terms of assembly, homodimer.

It carries out the reaction shikimate + NADP(+) = 3-dehydroshikimate + NADPH + H(+). It functions in the pathway metabolic intermediate biosynthesis; chorismate biosynthesis; chorismate from D-erythrose 4-phosphate and phosphoenolpyruvate: step 4/7. Its function is as follows. Involved in the biosynthesis of the chorismate, which leads to the biosynthesis of aromatic amino acids. Catalyzes the reversible NADPH linked reduction of 3-dehydroshikimate (DHSA) to yield shikimate (SA). This chain is Shikimate dehydrogenase (NADP(+)), found in Helicobacter hepaticus (strain ATCC 51449 / 3B1).